The following is a 228-amino-acid chain: A-type ATP synthase subunit D (228 aa).

Basic and acidic residues predominate over residues 205–214 (KKEEEEKAEA). Positions 205–228 (KKEEEEKAEAAAEAAAVEDPEPAD) are disordered.

Belongs to the V-ATPase D subunit family. In terms of assembly, has multiple subunits with at least A(3), B(3), C, D, E, F, H, I and proteolipid K(x).

The protein localises to the cell membrane. Functionally, component of the A-type ATP synthase that produces ATP from ADP in the presence of a proton gradient across the membrane. The chain is A-type ATP synthase subunit D from Halorubrum lacusprofundi (strain ATCC 49239 / DSM 5036 / JCM 8891 / ACAM 34).